The sequence spans 406 residues: L-carnitine CoA-transferase (406 aa).

Residues lysine 98 and arginine 105 each coordinate CoA. Catalysis depends on aspartate 170, which acts as the Nucleophile.

The protein belongs to the CoA-transferase III family. CaiB subfamily. In terms of assembly, homodimer.

It localises to the cytoplasm. It catalyses the reaction crotonobetainyl-CoA + (R)-carnitine = crotonobetaine + (R)-carnitinyl-CoA. The enzyme catalyses 4-(trimethylamino)butanoyl-CoA + (R)-carnitine = (R)-carnitinyl-CoA + 4-(trimethylamino)butanoate. Its pathway is amine and polyamine metabolism; carnitine metabolism. In terms of biological role, catalyzes the reversible transfer of the CoA moiety from gamma-butyrobetainyl-CoA to L-carnitine to generate L-carnitinyl-CoA and gamma-butyrobetaine. Is also able to catalyze the reversible transfer of the CoA moiety from gamma-butyrobetainyl-CoA or L-carnitinyl-CoA to crotonobetaine to generate crotonobetainyl-CoA. The protein is L-carnitine CoA-transferase (caiB) of Proteus sp. (strain LE138).